The primary structure comprises 100 residues: NADH-quinone oxidoreductase subunit K (100 aa).

3 helical membrane passes run 4–24 (TSYY…GVLL), 29–49 (IVVF…LVAF), and 60–80 (VIVF…LALL).

Belongs to the complex I subunit 4L family. As to quaternary structure, NDH-1 is composed of 14 different subunits. Subunits NuoA, H, J, K, L, M, N constitute the membrane sector of the complex.

It is found in the cell membrane. The enzyme catalyses a quinone + NADH + 5 H(+)(in) = a quinol + NAD(+) + 4 H(+)(out). Functionally, NDH-1 shuttles electrons from NADH, via FMN and iron-sulfur (Fe-S) centers, to quinones in the respiratory chain. The immediate electron acceptor for the enzyme in this species is believed to be ubiquinone. Couples the redox reaction to proton translocation (for every two electrons transferred, four hydrogen ions are translocated across the cytoplasmic membrane), and thus conserves the redox energy in a proton gradient. This chain is NADH-quinone oxidoreductase subunit K, found in Chloroflexus aurantiacus (strain ATCC 29366 / DSM 635 / J-10-fl).